A 555-amino-acid polypeptide reads, in one-letter code: Vetispiradiene synthase 1 (555 aa).

The Mg(2+) site is built by aspartate 308, aspartate 312, aspartate 451, threonine 455, and glutamate 459. A DDXXD motif motif is present at residues 308-312 (DDTFD).

The protein belongs to the terpene synthase family. Tpsa subfamily. Mg(2+) serves as cofactor.

It localises to the cytoplasm. The catalysed reaction is (2E,6E)-farnesyl diphosphate = (-)-vetispiradiene + diphosphate. It participates in secondary metabolite biosynthesis; terpenoid biosynthesis. Functionally, sesquiterpene synthase that catalyzes the formation of vetispiradiene from trans,trans-farnesyl diphosphate. The initial internal cyclization produces the monocyclic intermediate germacrene A. This is Vetispiradiene synthase 1 from Hyoscyamus muticus (Egyptian henbane).